A 276-amino-acid chain; its full sequence is Short-chain dehydrogenase anuF (276 aa).

NADP(+)-binding residues include isoleucine 18, aspartate 68, lysine 130, tyrosine 176, lysine 180, valine 209, and threonine 211. The active-site Proton acceptor is the tyrosine 176. The active-site Proton donor is tyrosine 176. The Lowers pKa of active site Tyr role is filled by lysine 180.

Belongs to the short-chain dehydrogenases/reductases (SDR) family.

It carries out the reaction (2R,9S)-annullatin H + A = (2R)-annullatin F + AH2. Functionally, cytochrome P450 monooxygenase; part of the gene cluster that mediates the biosynthesis of annullatin D, an alkylated aromatic polyketide with a fused dihydrobenzofuran lactone ring system that exhibits potent agonistic activities toward the cannabinoid receptors. Within the pathway, anuF is involved in the formation of (2R)-annullatin F from the diastereomer of (2S,9S)-annullatin H (compound 12). The annullatin backbone 2-hydroxymethyl-3-pentylphenol is assembled from one acetyl-CoA starter unit and 5 malonyl-CoA elongation units by cooperation of the highly reducing polyketide synthase anuA, the short-chain dehydrogenase anuB and the oxidoreductase anuC, before being hydroxylated at the C-5 alkyl chain by the cytochrome P450 monooxygenase anuE to form (8S)-annullatin E. The prenyltransferase anuH subsequently installs one isoprenyl group at the benzene ring to form (8S)-annullatin J. Enzymatic or nonenzymatic dihydro-benzofuran ring formation between the prenyl and the phenolic hydroxyl groups in (8S)-annullatin J results in two diastereomers (2S,9S)-annullatin H and compound 12. The intermediate (2S,9S)-annullatin H is then converted to (2S,9S)-annullatin D by the FAD-linked oxidoreductase anuG-catalyzed five-member lactone ring formation. The isomer 12 acts as a substrate for the short-chain dehydrogenase anuF and is oxidized to (2R)-annullatin F, which is subsequently acetylated by an acetyltransferase leading to (2R)-annullatin G formation. The remaining enzymes identified within the cluster, anuD, anuI and anuJ, seem not to be involved in annullatin biosynthesis. In Penicillium roqueforti (strain FM164), this protein is Short-chain dehydrogenase anuF.